Consider the following 94-residue polypeptide: Mitochondrial import receptor subunit TOM9-1 (94 aa).

Residues 1 to 48 lie on the Cytoplasmic side of the membrane; sequence MAPKKIGAGKGDSSILAKISNYDIVSQGRRAACDAVYVSKKLLKSTGK. A helical membrane pass occupies residues 49-66; the sequence is AAWIAGTTFLILAVPLIL. The Mitochondrial intermembrane portion of the chain corresponds to 67-94; it reads ELEQDHRLGEIDFEQASLLGTPPVGAML.

It belongs to the Tom22 family. In terms of assembly, forms part of the preprotein translocase complex of the outer mitochondrial membrane (TOM complex) which consists of at least 6 different proteins (TOM5, TOM6, TOM7, TOM20, TOM22/TOM9 and TOM40). In terms of tissue distribution, expressed in roots, flowers, young cotyledons and leaves.

It localises to the mitochondrion outer membrane. Functionally, central component of the receptor complex responsible for the recognition and translocation of cytosolically synthesized mitochondrial preproteins. Together with TOM20 functions as the transit peptide receptor at the surface of the mitochondrion outer membrane and facilitates the movement of preproteins into the translocation pore. This Arabidopsis thaliana (Mouse-ear cress) protein is Mitochondrial import receptor subunit TOM9-1 (TOM9-1).